The primary structure comprises 265 residues: R-spondin-1 (265 aa).

An N-terminal signal peptide occupies residues 1–20 (MRLGLCVVALVLSWTHIAVG). FU repeat units follow at residues 34-85 (AEGS…GYFD) and 91-135 (MNKC…GSTA). 11 disulfide bridges follow: Cys-40–Cys-47, Cys-44–Cys-53, Cys-56–Cys-75, Cys-79–Cys-94, Cys-97–Cys-105, Cys-102–Cys-111, Cys-114–Cys-125, Cys-129–Cys-142, Cys-148–Cys-190, Cys-159–Cys-166, and Cys-199–Cys-206. Asn-137 carries an N-linked (GlcNAc...) asparagine glycan. The 61-residue stretch at 147 to 207 (QCEMSEWSPW…KCTVRRTPCP (61 aa)) folds into the TSP type-1 domain. Trp-153 is a glycosylation site (C-linked (Man) tryptophan). Trp-156 is a glycosylation site (C-linked (Man) tryptophan; by DPY19L3). Disordered regions lie at residues 173–192 (EERT…TCSD) and 201–265 (VRRT…TWAQ). Low complexity predominate over residues 245-257 (QQQPQPGTTGPLT).

This sequence belongs to the R-spondin family. Interacts with ZNRF3; promoting indirect interaction between ZNRF3 and LGR4 and membrane clearance of ZNRF3. Identified in a complex composed of RNF43, LGR5 and RSPO1. Interacts with the extracellular domain of FZD8 and LRP6. It however does not form a ternary complex with FZD8 and LRP6. Interacts with WNT1. Binds heparin. Interacts with LGR4, LGR5 and LGR6. Interacts (via FU repeats) with KREM1. C-, and N-glycosylated. N-glycosylation at Asn-137, negatively influences its secretion and enhancing effect on Wnt/beta-catenin signaling. C-mannosylation at Trp-156 by DPY19L3 is required for its secretion an regulates the enhancing activity of Wnt signaling. In terms of tissue distribution, expressed in the dorsal part of the neural tube on 10 and 12 dpc, especially in the boundary region between roof plate and neuroepithelium. This expression is enhanced in the rostral part. Also expressed in other tissues such as truncal region neighboring forelimbs and mesenchymal tissues around the nasal cavity.

It localises to the secreted. It is found in the nucleus. Its function is as follows. Activator of the canonical Wnt signaling pathway by acting as a ligand for LGR4-6 receptors. Upon binding to LGR4-6 (LGR4, LGR5 or LGR6), LGR4-6 associate with phosphorylated LRP6 and frizzled receptors that are activated by extracellular Wnt receptors, triggering the canonical Wnt signaling pathway to increase expression of target genes. Also regulates the canonical Wnt/beta-catenin-dependent pathway and non-canonical Wnt signaling by acting as an inhibitor of ZNRF3, an important regulator of the Wnt signaling pathway. Acts as a ligand for frizzled FZD8 and LRP6. May negatively regulate the TGF-beta pathway. Has a essential roles in ovary determination. Regulates Wnt signaling by antagonizing DKK1/KREM1-mediated internalization of LRP6 through an interaction with KREM1. This is R-spondin-1 (Rspo1) from Mus musculus (Mouse).